The following is a 539-amino-acid chain: Probable methionine--tRNA ligase, mitochondrial (539 aa).

The 'HIGH' region motif lies at 28–38; sequence FYVNAAPHLGH. The 'KMSKS' region signature appears at 326 to 330; the sequence is KMSKS. ATP is bound at residue Lys329.

This sequence belongs to the class-I aminoacyl-tRNA synthetase family.

The protein localises to the mitochondrion matrix. It carries out the reaction tRNA(Met) + L-methionine + ATP = L-methionyl-tRNA(Met) + AMP + diphosphate. This is Probable methionine--tRNA ligase, mitochondrial from Schizosaccharomyces pombe (strain 972 / ATCC 24843) (Fission yeast).